Consider the following 172-residue polypeptide: Adenine phosphoribosyltransferase (172 aa).

The protein belongs to the purine/pyrimidine phosphoribosyltransferase family. In terms of assembly, homodimer.

The protein localises to the cytoplasm. It catalyses the reaction AMP + diphosphate = 5-phospho-alpha-D-ribose 1-diphosphate + adenine. Its pathway is purine metabolism; AMP biosynthesis via salvage pathway; AMP from adenine: step 1/1. Its function is as follows. Catalyzes a salvage reaction resulting in the formation of AMP, that is energically less costly than de novo synthesis. This is Adenine phosphoribosyltransferase from Methanococcus maripaludis (strain C7 / ATCC BAA-1331).